The chain runs to 385 residues: Heptahelical transmembrane protein 4 (385 aa).

Positions 1–12 are enriched in basic and acidic residues; that stretch reads MGDEAEIKEHLK. The interval 1–22 is disordered; sequence MGDEAEIKEHLKPQASSETMDK. At 1–79 the chain is on the cytoplasmic side; that stretch reads MGDEAEIKEH…LSIFTIHNET (79 aa). Residues 80 to 100 form a helical membrane-spanning segment; the sequence is LNVWTHLIGFFLFLALTIYTA. The Extracellular segment spans residues 101–191; sequence TKVPSVVDLH…LIFRPITRWP (91 aa). Residues 192 to 212 form a helical membrane-spanning segment; it reads FYAFLGGAMFCLLASSTCHLL. Topologically, residues 213 to 228 are cytoplasmic; that stretch reads SCHSERVSYIMLRLDY. The chain crosses the membrane as a helical span at residues 229–249; that stretch reads AGIAALIATSFYPPVYYSFMC. At 250-256 the chain is on the extracellular side; sequence DPFFCNL. Residues 257-277 form a helical membrane-spanning segment; sequence YLGFITILGIATVLVSLLPVF. The Cytoplasmic segment spans residues 278–288; that stretch reads QSPEFRVVRAS. A helical membrane pass occupies residues 289–309; the sequence is LFFGMGFSGLAPILHKLIIFW. The Extracellular segment spans residues 310–313; the sequence is DQPE. A helical transmembrane segment spans residues 314 to 334; the sequence is ALHTTGYEILMGLLYGLGALV. At 335-356 the chain is on the cytoplasmic side; it reads YATRIPERWMPGKFDIAGHSHQ. Residues 357–377 form a helical membrane-spanning segment; that stretch reads LFHVLVVAGAFTHYRAGLVYL.

It belongs to the ADIPOR family. As to expression, expressed in roots, leaves, stems and flowers.

It localises to the membrane. May play a role in abiotic stress response. This is Heptahelical transmembrane protein 4 (HHP4) from Arabidopsis thaliana (Mouse-ear cress).